The sequence spans 236 residues: Large ribosomal subunit protein uL1 (236 aa).

The protein belongs to the universal ribosomal protein uL1 family. As to quaternary structure, part of the 50S ribosomal subunit.

Its function is as follows. Binds directly to 23S rRNA. The L1 stalk is quite mobile in the ribosome, and is involved in E site tRNA release. Protein L1 is also a translational repressor protein, it controls the translation of the L11 operon by binding to its mRNA. The chain is Large ribosomal subunit protein uL1 from Corynebacterium glutamicum (strain R).